A 456-amino-acid chain; its full sequence is Signal transduction histidine-protein kinase ArlS (456 aa).

Transmembrane regions (helical) follow at residues 13–33 (LITTLITFTTILLFCLIIIFF) and 157–177 (IVALAFGLIATIITAGVSYIF). The 54-residue stretch at 179 to 232 (SQITKPIVTMSNKMNQIRRDGFQNKLELTTNYEETDNLIDTFNEMMYQIEESFN) folds into the HAMP domain. Residues 240 to 456 (DASHELRTPL…TFKISFPVLN (217 aa)) enclose the Histidine kinase domain. At His243 the chain carries Phosphohistidine; by autocatalysis.

Post-translationally, autophosphorylated.

The protein localises to the cell membrane. The enzyme catalyses ATP + protein L-histidine = ADP + protein N-phospho-L-histidine.. Its function is as follows. Member of the two-component regulatory system ArlS/ArlR. ArlS probably functions as a sensor protein kinase which is autophosphorylated at a histidine residue and transfers its phosphate group to ArlR. The chain is Signal transduction histidine-protein kinase ArlS (arlS) from Staphylococcus epidermidis (strain ATCC 35984 / DSM 28319 / BCRC 17069 / CCUG 31568 / BM 3577 / RP62A).